Consider the following 318-residue polypeptide: Protein FAM228A (318 aa).

Positions 259-297 (SQESKRHEKKGLALGTGQHRPRSWAAGEGQQRRRSQPVD) are disordered.

The protein belongs to the FAM228 family.

This chain is Protein FAM228A (FAM228A), found in Bos taurus (Bovine).